Consider the following 184-residue polypeptide: ATP synthase subunit b, chloroplastic (184 aa).

The helical transmembrane segment at 27–49 (LATNLINLSVVLGVLIFFGKGVL) threads the bilayer.

This sequence belongs to the ATPase B chain family. As to quaternary structure, F-type ATPases have 2 components, F(1) - the catalytic core - and F(0) - the membrane proton channel. F(1) has five subunits: alpha(3), beta(3), gamma(1), delta(1), epsilon(1). F(0) has four main subunits: a(1), b(1), b'(1) and c(10-14). The alpha and beta chains form an alternating ring which encloses part of the gamma chain. F(1) is attached to F(0) by a central stalk formed by the gamma and epsilon chains, while a peripheral stalk is formed by the delta, b and b' chains.

It is found in the plastid. Its subcellular location is the chloroplast thylakoid membrane. In terms of biological role, f(1)F(0) ATP synthase produces ATP from ADP in the presence of a proton or sodium gradient. F-type ATPases consist of two structural domains, F(1) containing the extramembraneous catalytic core and F(0) containing the membrane proton channel, linked together by a central stalk and a peripheral stalk. During catalysis, ATP synthesis in the catalytic domain of F(1) is coupled via a rotary mechanism of the central stalk subunits to proton translocation. Functionally, component of the F(0) channel, it forms part of the peripheral stalk, linking F(1) to F(0). This chain is ATP synthase subunit b, chloroplastic, found in Nymphaea alba (White water-lily).